The chain runs to 223 residues: MTEEVDFLGQDSDGGSEEVVLTPAELIERLEQAWMNEKFAPELLESKPEIVECVMEQLEHMEENLRRAKREDLKVSIHQMEMERIRYVLSSYLRCRLMKIEKFFPHVLEKEKTRPEGEPSSLSPEELAFAREFMANTESYLKNVALKHMPPNLQKVDLFRAVPKPDLDSYVFLRVRERQENILVEPDTDEQRDYVIDLEKGSQHLIRYKTIAPLVASGAVQLI.

Met1 is subject to N-acetylmethionine. Thr2 carries the N-acetylthreonine; in DNA replication complex GINS protein SLD5, N-terminally processed modification. 2 positions are modified to phosphoserine: Ser12 and Ser16. Positions 166 to 223 (DLDSYVFLRVRERQENILVEPDTDEQRDYVIDLEKGSQHLIRYKTIAPLVASGAVQLI) are important for GINS complex assembly.

Belongs to the GINS4/SLD5 family. As to quaternary structure, component of the GINS complex which is a heterotetramer of GINS1, GINS2, GINS3 and GINS4. Forms a stable subcomplex with GINS1. GINS complex interacts with DNA primase in vitro. Component of the CMG helicase complex, a hexameric ring of related MCM2-7 subunits stabilized by CDC45 and the tetrameric GINS complex.

Its subcellular location is the nucleus. It localises to the chromosome. The protein resides in the cytoplasm. Functionally, required for correct functioning of the GINS complex, a complex that plays an essential role in the initiation of DNA replication, and progression of DNA replication forks. GINS complex is a core component of CDC45-MCM-GINS (CMG) helicase, the molecular machine that unwinds template DNA during replication, and around which the replisome is built. This is DNA replication complex GINS protein SLD5 from Homo sapiens (Human).